The sequence spans 100 residues: UPF0213 protein YhbQ (100 aa).

Residues 2–77 form the GIY-YIG domain; it reads TPWFLYLIRT…KQLTKRQKER (76 aa).

It belongs to the UPF0213 family.

This Escherichia coli (strain K12 / MC4100 / BW2952) protein is UPF0213 protein YhbQ.